The sequence spans 343 residues: tRNA N6-adenosine threonylcarbamoyltransferase (343 aa).

Fe cation-binding residues include H115 and H119. Substrate is bound by residues 138-142 (LVSGA), D171, G184, and N276. D304 contributes to the Fe cation binding site.

It belongs to the KAE1 / TsaD family. Fe(2+) serves as cofactor.

Its subcellular location is the cytoplasm. The enzyme catalyses L-threonylcarbamoyladenylate + adenosine(37) in tRNA = N(6)-L-threonylcarbamoyladenosine(37) in tRNA + AMP + H(+). Required for the formation of a threonylcarbamoyl group on adenosine at position 37 (t(6)A37) in tRNAs that read codons beginning with adenine. Is involved in the transfer of the threonylcarbamoyl moiety of threonylcarbamoyl-AMP (TC-AMP) to the N6 group of A37, together with TsaE and TsaB. TsaD likely plays a direct catalytic role in this reaction. This is tRNA N6-adenosine threonylcarbamoyltransferase from Buchnera aphidicola subsp. Cinara cedri (strain Cc).